We begin with the raw amino-acid sequence, 274 residues long: Ubiquinone biosynthesis O-methyltransferase, mitochondrial (274 aa).

The N-terminal 30 residues, 1–30 (MNSMNILNKVKNVKSYTRLVRQGFLSQQRN), are a transit peptide targeting the mitochondrion. Positions 65, 88, 109, and 154 each coordinate S-adenosyl-L-methionine. Residues E155, E158, and H159 each coordinate Mg(2+).

Belongs to the class I-like SAM-binding methyltransferase superfamily. UbiG/COQ3 family. As to quaternary structure, component of a multi-subunit COQ enzyme complex, composed of at least coq3, coq4, coq5, coq6, coq7 and coq9. Mg(2+) serves as cofactor.

Its subcellular location is the mitochondrion inner membrane. The catalysed reaction is 3,4-dihydroxy-5-(all-trans-decaprenyl)benzoate + S-adenosyl-L-methionine = 4-hydroxy-3-methoxy-5-(all-trans-decaprenyl)benzoate + S-adenosyl-L-homocysteine + H(+). It catalyses the reaction a 3-demethylubiquinone + S-adenosyl-L-methionine = a ubiquinone + S-adenosyl-L-homocysteine. It carries out the reaction 3-demethylubiquinol-10 + S-adenosyl-L-methionine = ubiquinol-10 + S-adenosyl-L-homocysteine + H(+). The protein operates within cofactor biosynthesis; ubiquinone biosynthesis. Functionally, O-methyltransferase required for two non-consecutive steps during ubiquinone biosynthesis. Catalyzes the 2 O-methylation of 3,4-dihydroxy-5-(all-trans-decaprenyl)benzoic acid into 4-hydroxy-3-methoxy-5-(all-trans-decaprenyl)benzoic acid. Also catalyzes the last step of ubiquinone biosynthesis by mediating methylation of 3-demethylubiquinone into ubiquinone. Also able to mediate the methylation of 3-demethylubiquinol-10 into ubiquinol-10. This is Ubiquinone biosynthesis O-methyltransferase, mitochondrial from Schizosaccharomyces pombe (strain 972 / ATCC 24843) (Fission yeast).